The chain runs to 431 residues: Keratin, type I cytoskeletal 40 (431 aa).

The head stretch occupies residues methionine 1–glutamate 89. The IF rod domain occupies glutamate 89 to leucine 400. A coil 1A region spans residues lysine 90–glutamine 124. The interval cysteine 125–aspartate 135 is linker 1. Positions tyrosine 136–glutamate 236 are coil 1B. Positions glutamine 237–leucine 252 are linker 12. Residues aspartate 253–glutamate 396 form a coil 2 region. Positions aspartate 397–leucine 431 are tail.

The protein belongs to the intermediate filament family. Heterotetramer of two type I and two type II keratins. As to expression, expressed in skin and scalp. Also very weakly expressed in tongue, breast, colon and small intestine. In the hair follicle, it is specifically present in the upper hair cuticle. Not present in the upper cortex (at protein level).

Functionally, may play a role in late hair differentiation. This Homo sapiens (Human) protein is Keratin, type I cytoskeletal 40 (KRT40).